Here is a 180-residue protein sequence, read N- to C-terminus: Zein-beta (180 aa).

The first 19 residues, 1–19 (MKMVIVLVVWLALSAASAS), serve as a signal peptide directing secretion.

Its subcellular location is the vacuole. The protein resides in the aleurone grain. In terms of biological role, zeins are major seed storage proteins. The sequence is that of Zein-beta from Zea mays (Maize).